Here is a 433-residue protein sequence, read N- to C-terminus: Cell division control protein KAR1 (433 aa).

Disordered stretches follow at residues 1-38, 69-101, and 207-227; these read MNVT…SINL, TKNI…FYNG, and KPLP…TLQR. A Phosphothreonine modification is found at T233.

In terms of assembly, interacts with SPC72.

The protein localises to the cytoplasm. Its subcellular location is the cytoskeleton. It is found in the microtubule organizing center. The protein resides in the spindle pole body. Functionally, KAR1 is required for function of both intranuclear and extranuclear microtubules. KAR1 helps localize CDC31 to the spindle pole body (SPB), CDC31 then initiates SPB duplication via interaction with a downstream effector. This is Cell division control protein KAR1 (KAR1) from Saccharomyces cerevisiae (strain ATCC 204508 / S288c) (Baker's yeast).